A 392-amino-acid polypeptide reads, in one-letter code: Heat-inducible transcription repressor HrcA (392 aa).

Belongs to the HrcA family.

Functionally, negative regulator of class I heat shock genes (grpE-dnaK-dnaJ and groELS operons). Prevents heat-shock induction of these operons. The sequence is that of Heat-inducible transcription repressor HrcA from Chlamydia muridarum (strain MoPn / Nigg).